Here is a 253-residue protein sequence, read N- to C-terminus: Triosephosphate isomerase (253 aa).

A substrate-binding site is contributed by Asn9–Lys11. The active-site Electrophile is His96. Glu169 serves as the catalytic Proton acceptor. Residues Gly175, Ser215, and Gly236–Gly237 contribute to the substrate site.

This sequence belongs to the triosephosphate isomerase family. As to quaternary structure, homodimer.

It localises to the cytoplasm. It carries out the reaction D-glyceraldehyde 3-phosphate = dihydroxyacetone phosphate. It functions in the pathway carbohydrate biosynthesis; gluconeogenesis. It participates in carbohydrate degradation; glycolysis; D-glyceraldehyde 3-phosphate from glycerone phosphate: step 1/1. Functionally, involved in the gluconeogenesis. Catalyzes stereospecifically the conversion of dihydroxyacetone phosphate (DHAP) to D-glyceraldehyde-3-phosphate (G3P). This is Triosephosphate isomerase from Borreliella burgdorferi (strain ZS7) (Borrelia burgdorferi).